The following is a 199-amino-acid chain: Recombination protein RecR (199 aa).

A C4-type zinc finger spans residues 57-72; the sequence is CQKCRTFTEQSLCPIC. A Toprim domain is found at 81–176; the sequence is DTLCVVETPA…AVSRIAHGVP (96 aa).

The protein belongs to the RecR family.

Its function is as follows. May play a role in DNA repair. It seems to be involved in an RecBC-independent recombinational process of DNA repair. It may act with RecF and RecO. This Shewanella amazonensis (strain ATCC BAA-1098 / SB2B) protein is Recombination protein RecR.